We begin with the raw amino-acid sequence, 182 residues long: Antigenic integral membrane glycoprotein (182 aa).

Residues 1–35 (MFSFHERMKKKHVTIRVYKHERILVFLFVLFISTT) form the signal peptide. N-linked (GlcNAc...) asparagine glycosylation is found at N88 and N120. The helical transmembrane segment at 162 to 180 (EFLMSSCIVITLNLFIFMY) threads the bilayer. C168 is lipidated: S-palmitoyl cysteine.

It is found in the cell membrane. Functionally, major antigen in the surface tegument. The sequence is that of Antigenic integral membrane glycoprotein from Schistosoma mansoni (Blood fluke).